A 1226-amino-acid polypeptide reads, in one-letter code: DNA-directed RNA polymerase subunit beta (1226 aa).

This sequence belongs to the RNA polymerase beta chain family. In terms of assembly, the RNAP catalytic core consists of 2 alpha, 1 beta, 1 beta' and 1 omega subunit. When a sigma factor is associated with the core the holoenzyme is formed, which can initiate transcription.

It carries out the reaction RNA(n) + a ribonucleoside 5'-triphosphate = RNA(n+1) + diphosphate. Functionally, DNA-dependent RNA polymerase catalyzes the transcription of DNA into RNA using the four ribonucleoside triphosphates as substrates. This Leptospira interrogans serogroup Icterohaemorrhagiae serovar Lai (strain 56601) protein is DNA-directed RNA polymerase subunit beta.